We begin with the raw amino-acid sequence, 331 residues long: UPF0194 membrane protein CKO_02332 (331 aa).

The signal sequence occupies residues 1 to 15 (MKKPVVIALAVAALA). Residues 142–207 (ISANDLENAR…ELDLQDTTLI (66 aa)) are a coiled coil.

Belongs to the UPF0194 family.

Its subcellular location is the periplasm. This is UPF0194 membrane protein CKO_02332 from Citrobacter koseri (strain ATCC BAA-895 / CDC 4225-83 / SGSC4696).